The sequence spans 308 residues: N-acetylmuramic acid 6-phosphate etherase (308 aa).

The region spanning 62-225 is the SIS domain; it reads ITDAFKVGGR…TTASMIRLGK (164 aa). Catalysis depends on Glu-90, which acts as the Proton donor. Glu-121 is an active-site residue.

The protein belongs to the GCKR-like family. MurNAc-6-P etherase subfamily. As to quaternary structure, homodimer.

The catalysed reaction is N-acetyl-D-muramate 6-phosphate + H2O = N-acetyl-D-glucosamine 6-phosphate + (R)-lactate. Its pathway is amino-sugar metabolism; 1,6-anhydro-N-acetylmuramate degradation. The protein operates within amino-sugar metabolism; N-acetylmuramate degradation. It participates in cell wall biogenesis; peptidoglycan recycling. Functionally, specifically catalyzes the cleavage of the D-lactyl ether substituent of MurNAc 6-phosphate, producing GlcNAc 6-phosphate and D-lactate. Together with AnmK, is also required for the utilization of anhydro-N-acetylmuramic acid (anhMurNAc) either imported from the medium or derived from its own cell wall murein, and thus plays a role in cell wall recycling. In Vibrio campbellii (strain ATCC BAA-1116), this protein is N-acetylmuramic acid 6-phosphate etherase.